A 64-amino-acid chain; its full sequence is Large ribosomal subunit protein bL32 (64 aa).

This sequence belongs to the bacterial ribosomal protein bL32 family.

This is Large ribosomal subunit protein bL32 from Mycoplasma mobile (strain ATCC 43663 / 163K / NCTC 11711) (Mesomycoplasma mobile).